We begin with the raw amino-acid sequence, 410 residues long: 3-phosphoshikimate 1-carboxyvinyltransferase (410 aa).

3-phosphoshikimate-binding residues include K21, S22, and R26. A phosphoenolpyruvate-binding site is contributed by K21. Phosphoenolpyruvate contacts are provided by G69 and R97. 6 residues coordinate 3-phosphoshikimate: S143, S144, Q145, S171, D288, and K315. Position 145 (Q145) interacts with phosphoenolpyruvate. The active-site Proton acceptor is D288. Positions 319, 364, and 389 each coordinate phosphoenolpyruvate.

Belongs to the EPSP synthase family. Monomer.

The protein resides in the cytoplasm. The enzyme catalyses 3-phosphoshikimate + phosphoenolpyruvate = 5-O-(1-carboxyvinyl)-3-phosphoshikimate + phosphate. It participates in metabolic intermediate biosynthesis; chorismate biosynthesis; chorismate from D-erythrose 4-phosphate and phosphoenolpyruvate: step 6/7. In terms of biological role, catalyzes the transfer of the enolpyruvyl moiety of phosphoenolpyruvate (PEP) to the 5-hydroxyl of shikimate-3-phosphate (S3P) to produce enolpyruvyl shikimate-3-phosphate and inorganic phosphate. This is 3-phosphoshikimate 1-carboxyvinyltransferase from Bacteroides fragilis (strain ATCC 25285 / DSM 2151 / CCUG 4856 / JCM 11019 / LMG 10263 / NCTC 9343 / Onslow / VPI 2553 / EN-2).